A 146-amino-acid chain; its full sequence is Small RNA-binding protein 11, chloroplastic (146 aa).

A chloroplast-targeting transit peptide spans 1–31; that stretch reads MAALARIGGRHLKSVCLINSSASCFFTQRRG. The RRM domain maps to 34-112; that stretch reads SKLFIGGLSF…RTIFVDYAKA (79 aa). Ser42 is modified (phosphoserine).

As to expression, expressed in rosette leaves, cauline leaves, stems and flowers.

It localises to the plastid. The protein localises to the chloroplast. Functionally, probable RNA-binding protein that may be involved in salt and oxidative stress tolerance. The polypeptide is Small RNA-binding protein 11, chloroplastic (Arabidopsis thaliana (Mouse-ear cress)).